A 425-amino-acid chain; its full sequence is Histidine--tRNA ligase (425 aa).

This sequence belongs to the class-II aminoacyl-tRNA synthetase family. As to quaternary structure, homodimer.

Its subcellular location is the cytoplasm. The enzyme catalyses tRNA(His) + L-histidine + ATP = L-histidyl-tRNA(His) + AMP + diphosphate + H(+). This Shewanella sp. (strain ANA-3) protein is Histidine--tRNA ligase.